Here is a 799-residue protein sequence, read N- to C-terminus: Lon protease (799 aa).

The Lon N-terminal domain maps to 7-200; the sequence is LPVLPLRDIV…KVFALMEGEI (194 aa). 352–359 serves as a coordination point for ATP; sequence GPPGVGKT. The 182-residue stretch at 587–768 folds into the Lon proteolytic domain; that stretch reads VDQVGIVTGL…DEVLKHALTG (182 aa). Residues S674 and K717 contribute to the active site. The tract at residues 772-799 is disordered; the sequence is PVEWNEAEEPITTSAKKDDGDSDAMLTH.

The protein belongs to the peptidase S16 family. As to quaternary structure, homohexamer. Organized in a ring with a central cavity.

The protein localises to the cytoplasm. The catalysed reaction is Hydrolysis of proteins in presence of ATP.. ATP-dependent serine protease that mediates the selective degradation of mutant and abnormal proteins as well as certain short-lived regulatory proteins. Required for cellular homeostasis and for survival from DNA damage and developmental changes induced by stress. Degrades polypeptides processively to yield small peptide fragments that are 5 to 10 amino acids long. Binds to DNA in a double-stranded, site-specific manner. CcrM is an important target of the Lon protease pathway in C.crescentus. The chain is Lon protease from Caulobacter vibrioides (strain ATCC 19089 / CIP 103742 / CB 15) (Caulobacter crescentus).